A 349-amino-acid polypeptide reads, in one-letter code: Nuclear distribution protein nudE homolog 1-A (349 aa).

The stretch at 22-189 (VAMKYKQCSE…ELAVQQKQEK (168 aa)) forms a coiled coil.

This sequence belongs to the nudE family. Self-associates. Interacts with pafah1b1. Post-translationally, phosphorylated in mitosis.

The protein resides in the cytoplasm. Its subcellular location is the cytoskeleton. The protein localises to the microtubule organizing center. It is found in the centrosome. It localises to the spindle. The protein resides in the chromosome. Its subcellular location is the centromere. The protein localises to the kinetochore. It is found in the cleavage furrow. It localises to the cytoplasmic vesicle membrane. In terms of biological role, required for centrosome duplication and formation and function of the mitotic spindle. This Xenopus laevis (African clawed frog) protein is Nuclear distribution protein nudE homolog 1-A (nde1-a).